The sequence spans 5146 residues: SCO-spondin (5146 aa).

The first 17 residues, Met1–Gly17, serve as a signal peptide directing secretion. Residues Arg18–His94 enclose the EMI domain. N-linked (GlcNAc...) asparagine glycosylation is found at Asn80, Asn122, and Asn153. Residues Ala185–Leu356 enclose the VWFD 1 domain. 3 disulfide bridges follow: Cys187–Cys317, Cys209–Cys355, and Cys231–Cys237. Asn255 carries an N-linked (GlcNAc...) asparagine glycan. The region spanning Cys464–Cys519 is the TIL 1 domain. In terms of domain architecture, VWFD 2 spans Ala557–Ser730. Intrachain disulfides connect Cys559/Cys692 and Cys583/Cys729. Asn814 carries N-linked (GlcNAc...) asparagine glycosylation. Residues Cys822–Cys875 form the TIL 2 domain. N-linked (GlcNAc...) asparagine glycosylation occurs at Asn906. The region spanning Gly1008 to Pro1178 is the VWFD 3 domain. Disulfide bonds link Cys1010/Cys1142, Cys1032/Cys1177, and Cys1053/Cys1060. The region spanning Cys1271–Cys1327 is the TIL 3 domain. A glycan (N-linked (GlcNAc...) asparagine) is linked at Asn1349. 6 consecutive LDL-receptor class A domains span residues Gly1372–Ala1409, Val1412–Cys1447, Pro1448–Leu1484, Asp1488–Pro1526, Pro1561–Asp1597, and Pro1599–Glu1638. Intrachain disulfides connect Cys1373–Cys1386, Cys1380–Cys1399, Cys1393–Cys1408, Cys1413–Cys1425, Cys1420–Cys1438, Cys1432–Cys1447, Cys1449–Cys1461, Cys1456–Cys1474, Cys1468–Cys1483, Cys1489–Cys1501, Cys1496–Cys1514, Cys1508–Cys1525, Cys1562–Cys1574, Cys1569–Cys1587, Cys1581–Cys1596, Cys1600–Cys1613, Cys1607–Cys1626, and Cys1620–Cys1637. Asn1647 carries an N-linked (GlcNAc...) asparagine glycan. An LDL-receptor class A 7 domain is found at Pro1652–Gly1690. TSP type-1 domains lie at Cys1691–Pro1745 and Asp1747–Pro1805. Intrachain disulfides connect Cys1703–Cys1739, Cys1707–Cys1744, and Cys1718–Cys1729. Residue Asn1806 is glycosylated (N-linked (GlcNAc...) asparagine). Residues Cys1809–Cys1865 enclose the TIL 4 domain. 2 consecutive EGF-like domains span residues Cys1821–Val1860 and Trp1861–Gln1898. In terms of domain architecture, TSP type-1 3 spans Asn1906–Glu1962. 3 disulfides stabilise this stretch: Cys1907/Cys1946, Cys1918/Cys1922, and Cys1956/Cys1961. Positions Glu1962–Val2022 constitute a VWFC 1 domain. N-linked (GlcNAc...) asparagine glycosylation is found at Asn2027 and Asn2127. Cystine bridges form between Cys2062-Cys2220, Cys2226-Cys2238, Cys2233-Cys2251, and Cys2245-Cys2260. The F5/8 type C domain occupies Cys2062–Cys2220. In terms of domain architecture, LDL-receptor class A 8 spans Leu2225 to Val2261. Positions Thr2262–Ala2346 are disordered. Polar residues-rich tracts occupy residues Thr2273 to Pro2284 and Gly2331 to Glu2343. LDL-receptor class A domains are found at residues Gln2382–Ala2418 and Leu2442–Val2478. Disulfide bonds link Cys2383-Cys2395, Cys2390-Cys2408, Cys2402-Cys2417, Cys2443-Cys2455, Cys2450-Cys2468, Cys2462-Cys2477, Cys2480-Cys2516, Cys2491-Cys2495, Cys2526-Cys2531, Cys2546-Cys2583, Cys2550-Cys2588, and Cys2561-Cys2573. 2 TSP type-1 domains span residues Asp2479–Pro2532 and Ala2534–Ala2589. The TIL 5 domain occupies Val2611 to Cys2654. Residues Asn2624 and Asn2673 are each glycosylated (N-linked (GlcNAc...) asparagine). 3 consecutive TSP type-1 domains span residues Pro2694–Gly2748, Val2751–Leu2807, and Leu2809–Thr2862. Cystine bridges form between Cys2695-Cys2733, Cys2706-Cys2710, Cys2743-Cys2747, Cys2763-Cys2801, Cys2767-Cys2806, Cys2783-Cys2791, Cys2821-Cys2856, Cys2825-Cys2861, and Cys2836-Cys2846. N-linked (GlcNAc...) asparagine glycosylation is found at Asn2915 and Asn2946. 2 TSP type-1 domains span residues Ala2964–Gly3019 and Gly3020–Pro3071. 3 disulfide bridges follow: Cys2965–Cys3003, Cys2976–Cys2980, and Cys3013–Cys3018. N-linked (GlcNAc...) asparagine glycosylation is present at Asn3041. The 53-residue stretch at Cys3070 to Cys3122 folds into the TIL 6 domain. N-linked (GlcNAc...) asparagine glycosylation is found at Asn3143 and Asn3153. TSP type-1 domains lie at Gln3163 to Asp3230 and Ala3232 to Pro3287. 6 disulfide bridges follow: Cys3175-Cys3224, Cys3179-Cys3229, Cys3190-Cys3214, Cys3244-Cys3281, Cys3248-Cys3286, and Cys3259-Cys3271. Asn3290 carries N-linked (GlcNAc...) asparagine glycosylation. Positions Glu3295–Cys3345 constitute a TIL 7 domain. TSP type-1 domains follow at residues Pro3388 to Pro3450 and Asp3452 to Thr3507. 6 disulfide bridges follow: Cys3400–Cys3443, Cys3404–Cys3449, Cys3415–Cys3427, Cys3464–Cys3499, Cys3467–Cys3506, and Cys3477–Cys3489. 3 N-linked (GlcNAc...) asparagine glycosylation sites follow: Asn3502, Asn3580, and Asn3607. The region spanning Leu3626 to Arg3674 is the TSP type-1 15 domain. Cystine bridges form between Cys3638–Cys3668, Cys3642–Cys3673, and Cys3653–Cys3658. A glycan (N-linked (GlcNAc...) asparagine) is linked at Asn3783. 4 TSP type-1 domains span residues Ala3802–Pro3858, Pro3872–Thr3924, Asn3938–Pro3994, and Pro3996–Glu4051. Disulfide bonds link Cys3814–Cys3852, Cys3818–Cys3857, and Cys3830–Cys3842. Asn3906 and Asn3938 each carry an N-linked (GlcNAc...) asparagine glycan. 6 disulfides stabilise this stretch: Cys3939-Cys3975, Cys3950-Cys3954, Cys3988-Cys3993, Cys4008-Cys4045, Cys4012-Cys4050, and Cys4023-Cys4035. Residues Cys4054–Cys4109 form the TIL 8 domain. The region spanning Gly4101–Gly4168 is the VWFC 2 domain. Asn4131 carries N-linked (GlcNAc...) asparagine glycosylation. TSP type-1 domains lie at His4151 to Pro4204, Leu4245 to Pro4300, Leu4302 to Leu4358, and Glu4360 to Ser4414. 6 cysteine pairs are disulfide-bonded: Cys4152–Cys4188, Cys4163–Cys4167, Cys4198–Cys4203, Cys4257–Cys4294, Cys4261–Cys4299, and Cys4272–Cys4284. Residue Asn4341 is glycosylated (N-linked (GlcNAc...) asparagine). 3 disulfide bridges follow: Cys4361–Cys4398, Cys4372–Cys4374, and Cys4408–Cys4413. Asn4412 is a glycosylation site (N-linked (GlcNAc...) asparagine). The 56-residue stretch at Cys4418–Cys4473 folds into the TIL 9 domain. The TSP type-1 24 domain maps to Leu4610–Pro4661. 3 disulfides stabilise this stretch: Cys4611/Cys4645, Cys4622/Cys4626, and Cys4655/Cys4660. The TIL 10 domain maps to Asp4675 to Cys4721. N-linked (GlcNAc...) asparagine glycans are attached at residues Asn4729, Asn4746, Asn4751, and Asn4772. The 54-residue stretch at Cys4761–Pro4814 folds into the TSP type-1 25 domain. 3 cysteine pairs are disulfide-bonded: Cys4773/Cys4808, Cys4777/Cys4813, and Cys4788/Cys4797. The region spanning Cys4816–Cys4870 is the TIL 11 domain. Asn4861, Asn4901, Asn4947, and Asn4954 each carry an N-linked (GlcNAc...) asparagine glycan. The 59-residue stretch at Cys4983–Arg5041 folds into the VWFC 3 domain. Intrachain disulfides connect Cys5052-Cys5100, Cys5066-Cys5117, Cys5076-Cys5133, and Cys5080-Cys5135. Positions Cys5052–Gln5139 constitute a CTCK domain. Asn5060 is a glycosylation site (N-linked (GlcNAc...) asparagine).

It belongs to the thrombospondin family. Subcommissural organ. Located at the boundary of the diencephalon and mesencephalon beneath the posterior commissure at the point where the axons cross the midline.

It localises to the secreted. The protein resides in the extracellular space. Involved in the modulation of neuronal aggregation. May be involved in developmental events during the formation of the central nervous system. The polypeptide is SCO-spondin (SSPO) (Bos taurus (Bovine)).